Consider the following 332-residue polypeptide: Ribosomal RNA small subunit methyltransferase C (332 aa).

Belongs to the methyltransferase superfamily. RsmC family. Monomer.

Its subcellular location is the cytoplasm. It carries out the reaction guanosine(1207) in 16S rRNA + S-adenosyl-L-methionine = N(2)-methylguanosine(1207) in 16S rRNA + S-adenosyl-L-homocysteine + H(+). Specifically methylates the guanine in position 1207 of 16S rRNA in the 30S particle. The polypeptide is Ribosomal RNA small subunit methyltransferase C (Pseudomonas aeruginosa (strain LESB58)).